Reading from the N-terminus, the 140-residue chain is Large ribosomal subunit protein uL11 (140 aa).

This sequence belongs to the universal ribosomal protein uL11 family. In terms of assembly, part of the ribosomal stalk of the 50S ribosomal subunit. Interacts with L10 and the large rRNA to form the base of the stalk. L10 forms an elongated spine to which L12 dimers bind in a sequential fashion forming a multimeric L10(L12)X complex. One or more lysine residues are methylated.

Forms part of the ribosomal stalk which helps the ribosome interact with GTP-bound translation factors. This is Large ribosomal subunit protein uL11 from Staphylococcus epidermidis (strain ATCC 35984 / DSM 28319 / BCRC 17069 / CCUG 31568 / BM 3577 / RP62A).